A 61-amino-acid chain; its full sequence is Metallothionein-1B (61 aa).

Residues 1–29 (MDPNCSCTTGGSCACAGSCKCKECKCTSC) form a beta region. Residues C5, C7, C13, C15, C19, C21, C24, C26, C29, C33, C34, C36, C37, C41, C44, C48, C50, C57, C59, and C60 each contribute to the a divalent metal cation site. An alpha region spans residues 30-61 (KKCCCSCCPVGCAKCAQGCVCKGSSEKCRCCA).

This sequence belongs to the metallothionein superfamily. Type 1 family. In terms of assembly, monomer.

Its function is as follows. Metallothioneins have a high content of cysteine residues that bind various heavy metals; these proteins are transcriptionally regulated by both heavy metals and glucocorticoids. This chain is Metallothionein-1B (MT1B), found in Homo sapiens (Human).